Reading from the N-terminus, the 706-residue chain is Ribosomal RNA large subunit methyltransferase K/L (706 aa).

The THUMP domain maps to 43–154 (LMYQSLLWSR…RDMASVALDL (112 aa)).

Belongs to the methyltransferase superfamily. RlmKL family.

It is found in the cytoplasm. It carries out the reaction guanosine(2445) in 23S rRNA + S-adenosyl-L-methionine = N(2)-methylguanosine(2445) in 23S rRNA + S-adenosyl-L-homocysteine + H(+). It catalyses the reaction guanosine(2069) in 23S rRNA + S-adenosyl-L-methionine = N(2)-methylguanosine(2069) in 23S rRNA + S-adenosyl-L-homocysteine + H(+). Functionally, specifically methylates the guanine in position 2445 (m2G2445) and the guanine in position 2069 (m7G2069) of 23S rRNA. The polypeptide is Ribosomal RNA large subunit methyltransferase K/L (Yersinia pestis (strain Pestoides F)).